The following is a 169-amino-acid chain: Orotate phosphoribosyltransferase (169 aa).

5-phospho-alpha-D-ribose 1-diphosphate is bound by residues R86, K90, H92, and 111–119 (EDVTTSGGS). Residues T115 and R143 each coordinate orotate.

It belongs to the purine/pyrimidine phosphoribosyltransferase family. PyrE subfamily. As to quaternary structure, homodimer. The cofactor is Mg(2+).

It catalyses the reaction orotidine 5'-phosphate + diphosphate = orotate + 5-phospho-alpha-D-ribose 1-diphosphate. Its pathway is pyrimidine metabolism; UMP biosynthesis via de novo pathway; UMP from orotate: step 1/2. In terms of biological role, catalyzes the transfer of a ribosyl phosphate group from 5-phosphoribose 1-diphosphate to orotate, leading to the formation of orotidine monophosphate (OMP). This chain is Orotate phosphoribosyltransferase, found in Methanocorpusculum labreanum (strain ATCC 43576 / DSM 4855 / Z).